We begin with the raw amino-acid sequence, 280 residues long: Digeranylgeranylglyceryl phosphate synthase (280 aa).

The next 9 membrane-spanning stretches (helical) occupy residues 4 to 24 (AAYL…AGIL), 27 to 47 (IIAT…VLTI), 83 to 103 (LMYA…FTPL), 104 to 124 (PLAG…SFLK), 128 to 148 (LIGN…GGAI), 150 to 170 (GTQG…VMLA), 199 to 219 (ATIY…LLLY), 222 to 242 (WGAF…FGAI), and 260 to 280 (KILK…AVLL).

The protein belongs to the UbiA prenyltransferase family. DGGGP synthase subfamily. The cofactor is Mg(2+).

Its subcellular location is the cell membrane. The catalysed reaction is sn-3-O-(geranylgeranyl)glycerol 1-phosphate + (2E,6E,10E)-geranylgeranyl diphosphate = 2,3-bis-O-(geranylgeranyl)-sn-glycerol 1-phosphate + diphosphate. Its pathway is membrane lipid metabolism; glycerophospholipid metabolism. Functionally, prenyltransferase that catalyzes the transfer of the geranylgeranyl moiety of geranylgeranyl diphosphate (GGPP) to the C2 hydroxyl of (S)-3-O-geranylgeranylglyceryl phosphate (GGGP). This reaction is the second ether-bond-formation step in the biosynthesis of archaeal membrane lipids. This chain is Digeranylgeranylglyceryl phosphate synthase, found in Methanospirillum hungatei JF-1 (strain ATCC 27890 / DSM 864 / NBRC 100397 / JF-1).